Here is a 322-residue protein sequence, read N- to C-terminus: Pantothenate kinase (322 aa).

Position 101 to 108 (101 to 108 (GSVAVGKS)) interacts with ATP.

The protein belongs to the prokaryotic pantothenate kinase family.

It is found in the cytoplasm. The catalysed reaction is (R)-pantothenate + ATP = (R)-4'-phosphopantothenate + ADP + H(+). It participates in cofactor biosynthesis; coenzyme A biosynthesis; CoA from (R)-pantothenate: step 1/5. This Psychromonas ingrahamii (strain DSM 17664 / CCUG 51855 / 37) protein is Pantothenate kinase.